The primary structure comprises 324 residues: Delta-aminolevulinic acid dehydratase (324 aa).

Zn(2+) is bound by residues Cys-118, Cys-120, and Cys-128. Lys-195 (schiff-base intermediate with substrate) is an active-site residue. Residues Arg-205 and Arg-217 each contribute to the 5-aminolevulinate site. Glu-233 is a binding site for Mg(2+). Lys-248 serves as the catalytic Schiff-base intermediate with substrate. Ser-274 and Tyr-313 together coordinate 5-aminolevulinate.

Belongs to the ALAD family. Homooctamer. The cofactor is Zn(2+).

It carries out the reaction 2 5-aminolevulinate = porphobilinogen + 2 H2O + H(+). It participates in porphyrin-containing compound metabolism; protoporphyrin-IX biosynthesis; coproporphyrinogen-III from 5-aminolevulinate: step 1/4. Catalyzes an early step in the biosynthesis of tetrapyrroles. Binds two molecules of 5-aminolevulinate per subunit, each at a distinct site, and catalyzes their condensation to form porphobilinogen. The polypeptide is Delta-aminolevulinic acid dehydratase (hemB) (Staphylococcus aureus (strain NCTC 8325 / PS 47)).